The primary structure comprises 516 residues: L-amino-acid oxidase (516 aa).

An N-terminal signal peptide occupies residues 1-18 (MNVFFMFSLLFLAALGSC). A disulfide bridge connects residues C28 and C189. FAD is bound by residues 61-62 (MS), 81-82 (EA), R89, and 103-106 (GPMR). R106 and H239 together coordinate substrate. Position 279 (V279) interacts with FAD. A disulfide bond links C349 and C430. N379 carries an N-linked (GlcNAc...) asparagine glycan. Substrate is bound at residue Y390. Residues E475 and 482-487 (GWIDST) contribute to the FAD site. Position 482–483 (482–483 (GW)) interacts with substrate.

The protein belongs to the flavin monoamine oxidase family. FIG1 subfamily. Homodimer; non-covalently linked. FAD is required as a cofactor. Post-translationally, N-glycosylated. Expressed by the venom gland.

The protein localises to the secreted. It carries out the reaction an L-alpha-amino acid + O2 + H2O = a 2-oxocarboxylate + H2O2 + NH4(+). In terms of biological role, catalyzes an oxidative deamination of predominantly hydrophobic and aromatic L-amino acids, thus producing hydrogen peroxide that may contribute to the diverse toxic effects of this enzyme. Exhibits diverse biological activities, such as hemorrhage, hemolysis, edema, apoptosis of vascular endothelial cells or tumor cell lines, antibacterial and antiparasitic activities, as well as regulation of platelet aggregation. Effects of snake L-amino oxidases on platelets are controversial, since they either induce aggregation or inhibit agonist-induced aggregation. These different effects are probably due to different experimental conditions. The sequence is that of L-amino-acid oxidase from Sistrurus catenatus edwardsii (Desert massasauga).